Reading from the N-terminus, the 138-residue chain is Ribosome-binding factor A (138 aa).

The segment at 117–138 (AEDGQHQEGPASADAKPESTEE) is disordered.

It belongs to the RbfA family. As to quaternary structure, monomer. Binds 30S ribosomal subunits, but not 50S ribosomal subunits or 70S ribosomes.

It localises to the cytoplasm. In terms of biological role, one of several proteins that assist in the late maturation steps of the functional core of the 30S ribosomal subunit. Associates with free 30S ribosomal subunits (but not with 30S subunits that are part of 70S ribosomes or polysomes). Required for efficient processing of 16S rRNA. May interact with the 5'-terminal helix region of 16S rRNA. This Pseudomonas syringae pv. syringae (strain B728a) protein is Ribosome-binding factor A.